The following is a 387-amino-acid chain: MAVKVLVVDDSGFFRRRVTEILSSDPNIVVVGTATNGKEAIEQALALKPDVITMDYEMPMMDGITAVRHIMQRIPTPVLMFSSLTHEGARVTLDALDAGAVDFLPKNFEDISRNPQKVKQLLCEKINSISRSNRRSSGFGAASAASAAAPAAPTSSSRAPAPTTAPARAVPTRTAAPATAPAAHAHHAPAHPTTSGTPKRKAYKLVAIGTSTGGPVALQRVLTQLPASFPAPLVLIQHMPAAFTKAFAERLDKLCKISVKEAEDGDVLRPGLALLAPGGKQMMVDARGTVKILPGDERLNYKPCVDITFGSAAKSYGDKVLSVVLTGMGADGREGARLLKQAGSTVWAQDEASCVIYGMPMAIVKAELADAIYSLDDIGRHLVEACL.

A Response regulatory domain is found at Lys4 to Leu121. 4-aspartylphosphate is present on Asp55. Low complexity predominate over residues Ala148–Ala183. The interval Ala148–Lys199 is disordered. Residues Pro192–Glu384 form the CheB-type methylesterase domain. Catalysis depends on residues Ser211, His238, and Asp331.

It belongs to the CheB family. Post-translationally, phosphorylated by CheA. Phosphorylation of the N-terminal regulatory domain activates the methylesterase activity.

The protein resides in the cytoplasm. It catalyses the reaction [protein]-L-glutamate 5-O-methyl ester + H2O = L-glutamyl-[protein] + methanol + H(+). The enzyme catalyses L-glutaminyl-[protein] + H2O = L-glutamyl-[protein] + NH4(+). In terms of biological role, involved in chemotaxis. Part of a chemotaxis signal transduction system that modulates chemotaxis in response to various stimuli. Catalyzes the demethylation of specific methylglutamate residues introduced into the chemoreceptors (methyl-accepting chemotaxis proteins or MCP) by CheR. Also mediates the irreversible deamidation of specific glutamine residues to glutamic acid. The polypeptide is Protein-glutamate methylesterase/protein-glutamine glutaminase 2 (Pseudomonas savastanoi pv. phaseolicola (strain 1448A / Race 6) (Pseudomonas syringae pv. phaseolicola (strain 1448A / Race 6))).